Reading from the N-terminus, the 153-residue chain is MSSHQQKQPCTAPPQLHEQQVKQPCQPPPPEPCVSQVKTPCDTKVPEPCHPKAPEPCHPKAPEPCHPKAPEPCHPKAPEPCHPKAPEPCHPKAPEPCHPKAPEPCHPKAPEPCHPKVPEPCLPKAPEPCQPIVPEPCPSTVTPILAQQKTKQK.

2 disordered regions span residues 1 to 35 (MSSHQQKQPCTAPPQLHEQQVKQPCQPPPPEPCVS) and 49 to 85 (CHPKAPEPCHPKAPEPCHPKAPEPCHPKAPEPCHPKA). Tandem repeats lie at residues 27-34 (PPPPEPCV), 35-42 (SQVKTPCD), 43-50 (TKVPEPCH), 51-58 (PKAPEPCH), 59-66 (PKAPEPCH), 67-74 (PKAPEPCH), 75-82 (PKAPEPCH), 83-90 (PKAPEPCH), 91-98 (PKAPEPCH), 99-106 (PKAPEPCH), 107-114 (PKAPEPCH), 115-122 (PKVPEPCL), 123-130 (PKAPEPCQ), and 131-138 (PIVPEPCP). A 14 X 8 AA approximate tandem repeats region spans residues 27-138 (PPPPEPCVSQ…CQPIVPEPCP (112 aa)).

It belongs to the cornifin (SPRR) family. Expressed in fetal periderm, hair follicles and in the thickened epidermis of the lip and footpad. Also present in the epithelia of various tissues such as the penis, vagina, forestomach, tongue and esophagus.

It localises to the cytoplasm. Cross-linked envelope protein of keratinocytes. It is a keratinocyte protein that first appears in the cell cytosol, but ultimately becomes cross-linked to membrane proteins by transglutaminase. All that results in the formation of an insoluble envelope beneath the plasma membrane. The polypeptide is Cornifin-B (Sprr1b) (Mus musculus (Mouse)).